A 424-amino-acid polypeptide reads, in one-letter code: Zinc metalloproteinase-disintegrin-like brevilysin H2a (424 aa).

Residue Q1 is modified to Pyrrolidone carboxylic acid. The Peptidase M12B domain maps to 9–207 (RYVKLAIVAD…YKPQCILNEP (199 aa)). N69 carries an N-linked (GlcNAc...) asparagine glycan. D96 contributes to the Ca(2+) binding site. Cystine bridges form between C120/C202, C164/C186, and C166/C169. H145 serves as a coordination point for Zn(2+). Residue E146 is part of the active site. H149 and H155 together coordinate Zn(2+). Residue N185 is glycosylated (N-linked (GlcNAc...) asparagine). Residues C202, N205, V217, N220, L222, E224, E227, and D230 each coordinate Ca(2+). In terms of domain architecture, Disintegrin spans 215–301 (PPVCGNELLE…DCPTDDLQRN (87 aa)). 14 disulfides stabilise this stretch: C218–C247, C229–C242, C231–C237, C241–C264, C255–C261, C260–C286, C273–C293, C280–C312, C305–C317, C324–C374, C339–C385, C352–C362, C369–C411, and C405–C417. The short motif at 279–281 (DCD) is the D/ECD-tripeptide element. 3 residues coordinate Ca(2+): D281, E284, and D296. N331 carries an N-linked (GlcNAc...) asparagine glycan.

Belongs to the venom metalloproteinase (M12B) family. P-III subfamily. P-IIIa sub-subfamily. As to quaternary structure, monomer. Requires Zn(2+) as cofactor. Post-translationally, glycosylated. In terms of tissue distribution, expressed by the venom gland.

Its subcellular location is the secreted. Its activity is regulated as follows. Its proteolytic activity is inhibited by EDTA, TPEN, 1,10-phenanthroline, and some thiol compounds, but is enhanced by alkaline earth metal ions (Mg2+, Ca2+, Sr2+, and Ba2+). Its activity is not modulated by urea (4 M). Its function is as follows. Non-hemorrhagic metalloproteinase that degrades fibrinogen. The alpha chain (FGA) is rapidly degraded, the beta chain (FGB) is degraded very slowly, while the gamma chain is left intact. Shows a prefential cleavage at X-Leu bonds. Cleaves insulin B chain at '29-His-|-Leu-30', '33-Ser-|-His-34', '38-Ala-|-Leu-39' and '40-Tyr-|-Leu-41' bonds. The chain is Zinc metalloproteinase-disintegrin-like brevilysin H2a from Gloydius brevicauda (Korean slamosa snake).